The following is a 197-amino-acid chain: Imidazoleglycerol-phosphate dehydratase (197 aa).

The protein belongs to the imidazoleglycerol-phosphate dehydratase family.

The protein resides in the cytoplasm. The catalysed reaction is D-erythro-1-(imidazol-4-yl)glycerol 3-phosphate = 3-(imidazol-4-yl)-2-oxopropyl phosphate + H2O. It participates in amino-acid biosynthesis; L-histidine biosynthesis; L-histidine from 5-phospho-alpha-D-ribose 1-diphosphate: step 6/9. This is Imidazoleglycerol-phosphate dehydratase from Syntrophus aciditrophicus (strain SB).